The primary structure comprises 202 residues: Putative transmembrane protein ORF202 (202 aa).

A run of 5 helical transmembrane segments spans residues 13–33 (AIAFGLAYSILEVNVPLFHYI), 40–60 (VFYLIIFAIANMTLPLSLFLG), 87–107 (YYPVIDGIPIADVIEVIISVF), 156–176 (YGALTLVLVSVLAILSSHSLS), and 177–197 (LTAFATLSLIVGTGIFVDLWA).

It localises to the host membrane. This chain is Putative transmembrane protein ORF202, found in Acidianus filamentous virus 2 (isolate Italy/Pozzuoli) (AFV-2).